Reading from the N-terminus, the 64-residue chain is Large ribosomal subunit protein bL33 (64 aa).

Belongs to the bacterial ribosomal protein bL33 family.

The sequence is that of Large ribosomal subunit protein bL33 from Nostoc sp. (strain PCC 7120 / SAG 25.82 / UTEX 2576).